We begin with the raw amino-acid sequence, 393 residues long: Sulfite oxidase (393 aa).

The disordered stretch occupies residues 1-27; sequence MPGIRGPSEYSQEPPRHPSLKVNAKEP. Residues 10-242 are moco domain; the sequence is YSQEPPRHPS…QGFFMQKDYK (233 aa). Mo-molybdopterin-binding positions include 49–53, cysteine 98, 159–161, histidine 202, arginine 207, and 218–220; these read YKRNH, SVD, and SVK. Residues 243 to 393 form a homodimerization region; it reads MFPPSVNWDN…VLLRLGHSNL (151 aa). Residues 391-393 carry the Microbody targeting signal motif; it reads SNL.

As to quaternary structure, predominantly monomer; also homodimer. Requires Mo-molybdopterin as cofactor.

The protein localises to the peroxisome. The catalysed reaction is sulfite + O2 + H2O = sulfate + H2O2. It participates in energy metabolism; sulfur metabolism. Probably involved in sulfite oxidative detoxification. The polypeptide is Sulfite oxidase (SOX) (Arabidopsis thaliana (Mouse-ear cress)).